Consider the following 242-residue polypeptide: Cell division protein FtsQ (242 aa).

Residues methionine 1–threonine 12 lie on the Cytoplasmic side of the membrane. The helical transmembrane segment at arginine 13 to tyrosine 32 threads the bilayer. Residues asparagine 33–glutamate 242 lie on the Periplasmic side of the membrane. Positions leucine 37–arginine 106 constitute a POTRA domain.

It belongs to the FtsQ/DivIB family. FtsQ subfamily. As to quaternary structure, part of a complex composed of FtsB, FtsL and FtsQ.

Its subcellular location is the cell inner membrane. In terms of biological role, essential cell division protein. May link together the upstream cell division proteins, which are predominantly cytoplasmic, with the downstream cell division proteins, which are predominantly periplasmic. May control correct divisome assembly. This Neisseria gonorrhoeae (strain ATCC 700825 / FA 1090) protein is Cell division protein FtsQ.